A 410-amino-acid chain; its full sequence is LL-diaminopimelate aminotransferase (410 aa).

Positions 15 and 42 each coordinate substrate. Residues Tyr-72, 108-109 (TK), Tyr-132, Asn-186, Tyr-217, and 245-247 (SFS) contribute to the pyridoxal 5'-phosphate site. Lys-109, Tyr-132, and Asn-186 together coordinate substrate. The residue at position 248 (Lys-248) is an N6-(pyridoxal phosphate)lysine. Residues Arg-256 and Asn-291 each coordinate pyridoxal 5'-phosphate. Substrate contacts are provided by Asn-291 and Arg-387.

It belongs to the class-I pyridoxal-phosphate-dependent aminotransferase family. LL-diaminopimelate aminotransferase subfamily. Homodimer. It depends on pyridoxal 5'-phosphate as a cofactor.

It catalyses the reaction (2S,6S)-2,6-diaminopimelate + 2-oxoglutarate = (S)-2,3,4,5-tetrahydrodipicolinate + L-glutamate + H2O + H(+). Its pathway is amino-acid biosynthesis; L-lysine biosynthesis via DAP pathway; LL-2,6-diaminopimelate from (S)-tetrahydrodipicolinate (aminotransferase route): step 1/1. Involved in the synthesis of meso-diaminopimelate (m-DAP or DL-DAP), required for both lysine and peptidoglycan biosynthesis. Catalyzes the direct conversion of tetrahydrodipicolinate to LL-diaminopimelate. This is LL-diaminopimelate aminotransferase from Lawsonia intracellularis (strain PHE/MN1-00).